Consider the following 258-residue polypeptide: Global transcriptional regulator CodY (258 aa).

Residues 1–156 are GAF domain; that stretch reads MSSLLDKTRM…SATIIGLEIL (156 aa). The H-T-H motif DNA-binding region spans 204–223; sequence ASKIADKVGITRSVIVNALR.

The protein belongs to the CodY family.

The protein localises to the cytoplasm. Functionally, DNA-binding global transcriptional regulator which is involved in the adaptive response to starvation and acts by directly or indirectly controlling the expression of numerous genes in response to nutrient availability. During rapid exponential growth, CodY is highly active and represses genes whose products allow adaptation to nutrient depletion. This chain is Global transcriptional regulator CodY, found in Clostridium botulinum (strain Okra / Type B1).